The primary structure comprises 362 residues: MRDETPEQPAPLRFGYTTGSCATATSLAAARLLLTGHASDMVDIVLPKGQHVAMRLAFCRATDGGAEAGTIKDAGDDPDVTHGALVFARVRLVHEPGVRFRAGPGVGTVTRAGLTIGVGEPAINPVPRRMMTEHLAALAAEHGYAGGFEVAIGVENGEALARKTMNPRLGIVGGLSILGTTGIVRPFSCSAYIASIHQGIDVARANGVTHIAACTGNASEDAVRARYGLPDIALIEMGDFAGAVLKYLRRASVERLTLCGGFGKLSKLAAGHLDLHSRHSSIDLPRLAQWAGEAGASAVLQHEIRAANTSQQALSLALAHHVPLGDVVCAHARRVARDIVPDEVDVETLAIDREGRIVGVAR.

It belongs to the CbiD family.

The catalysed reaction is Co-precorrin-5B + S-adenosyl-L-methionine = Co-precorrin-6A + S-adenosyl-L-homocysteine. It functions in the pathway cofactor biosynthesis; adenosylcobalamin biosynthesis; cob(II)yrinate a,c-diamide from sirohydrochlorin (anaerobic route): step 6/10. Functionally, catalyzes the methylation of C-1 in cobalt-precorrin-5B to form cobalt-precorrin-6A. The sequence is that of Cobalt-precorrin-5B C(1)-methyltransferase from Burkholderia thailandensis (strain ATCC 700388 / DSM 13276 / CCUG 48851 / CIP 106301 / E264).